Here is a 379-residue protein sequence, read N- to C-terminus: Pectin lyase B (379 aa).

An N-terminal signal peptide occupies residues 1-19 (MRLHAPILSLLAAAASTSA). 2 disulfide bridges follow: Cys-82–Cys-101 and Cys-91–Cys-225. N-linked (GlcNAc...) asparagine glycosylation occurs at Asn-128. Arg-255 is an active-site residue. Cys-322 and Cys-330 form a disulfide bridge.

The protein belongs to the polysaccharide lyase 1 family.

It is found in the secreted. The enzyme catalyses Eliminative cleavage of (1-&gt;4)-alpha-D-galacturonan methyl ester to give oligosaccharides with 4-deoxy-6-O-methyl-alpha-D-galact-4-enuronosyl groups at their non-reducing ends.. Pectinolytic enzymes consist of four classes of enzymes: pectin lyase, polygalacturonase, pectin methylesterase and rhamnogalacturonase. Among pectinolytic enzymes, pectin lyase is the most important in depolymerization of pectin, since it cleaves internal glycosidic bonds of highly methylated pectins. The polypeptide is Pectin lyase B (pelB) (Emericella nidulans (strain FGSC A4 / ATCC 38163 / CBS 112.46 / NRRL 194 / M139) (Aspergillus nidulans)).